A 965-amino-acid polypeptide reads, in one-letter code: Collagenase ColQ1 (965 aa).

Residues Met1–Ala30 form the signal peptide. Residues Glu31–Ser93 constitute a propeptide that is removed on maturation. The tract at residues Tyr94–Asn366 is activator domain. The segment at Tyr94–Gly765 is S1 metalloprotease domain. The segment at Asp376–Lys645 is catalytic subdomain. Residue His501 coordinates Zn(2+). Glu502 is a catalytic residue. Residues His505 and Glu533 each contribute to the Zn(2+) site. The segment at Asp653–Gly765 is helper subdomain. One can recognise a PKD domain in the interval Ala769 to Val850. The disordered stretch occupies residues Ser842–Ala867. Over residues Glu845–Glu859 the composition is skewed to polar residues. Residues Gly853 to Lys965 are collagen-binding domain.

Belongs to the peptidase M9B family. Collagenase subfamily. Ca(2+) serves as cofactor. The cofactor is Zn(2+).

It is found in the secreted. The catalysed reaction is Digestion of native collagen in the triple helical region at Xaa-|-Gly bonds. With synthetic peptides, a preference is shown for Gly at P3 and P1', Pro and Ala at P2 and P2', and hydroxyproline, Ala or Arg at P3'.. Strongly inhibited by EDTA. Not inhibited by E-64 and PMSF, broad-spectrum cysteine and serine protease inhibitors. Its function is as follows. Acts as a true collagenase, which is highly active and cleaves natively folded collagen. In vitro, can also cleave gelatin and the synthetic peptide FALGPA (furylacryloyl-Leu-Gly-Pro-Ala). Causes damage on dermal collagen (COL), resulting in gaps in the tissue, which might lead to an accelerated bacterial infiltration and penetration into deeper sites of the host. This Bacillus cereus (strain Q1) protein is Collagenase ColQ1.